A 151-amino-acid chain; its full sequence is Large ribosomal subunit protein eL19 (151 aa).

The tract at residues 62 to 93 (RLKERRKKRSLKSEGKKSGSRKGKKGARANSK) is disordered. Positions 79–88 (SGSRKGKKGA) are enriched in basic residues.

The protein belongs to the eukaryotic ribosomal protein eL19 family. Part of the 50S ribosomal subunit.

Functionally, binds to the 23S rRNA. The polypeptide is Large ribosomal subunit protein eL19 (Saccharolobus solfataricus (strain ATCC 35092 / DSM 1617 / JCM 11322 / P2) (Sulfolobus solfataricus)).